Consider the following 341-residue polypeptide: Ribosomal RNA small subunit methyltransferase H (341 aa).

S-adenosyl-L-methionine contacts are provided by residues 47–49, Asp-64, Phe-91, Asp-109, and Gln-116; that span reads GGY.

Belongs to the methyltransferase superfamily. RsmH family.

The protein resides in the cytoplasm. The enzyme catalyses cytidine(1402) in 16S rRNA + S-adenosyl-L-methionine = N(4)-methylcytidine(1402) in 16S rRNA + S-adenosyl-L-homocysteine + H(+). Functionally, specifically methylates the N4 position of cytidine in position 1402 (C1402) of 16S rRNA. This chain is Ribosomal RNA small subunit methyltransferase H, found in Agrobacterium fabrum (strain C58 / ATCC 33970) (Agrobacterium tumefaciens (strain C58)).